The chain runs to 467 residues: Syntaxin-5 (467 aa).

Disordered regions lie at residues 1–53 (MQTR…QSLV) and 58–77 (GHEAAIHIGDNYQSGDSIST). The Cytoplasmic segment spans residues 1–445 (MQTRRRLHQT…KYFQSVSKNR (445 aa)). Positions 10–22 (TDQQDYSSSSTYT) are enriched in low complexity. Gly residues predominate over residues 29-45 (GGAGAGSVGTGTAGGSV). The span at 68-77 (NYQSGDSIST) shows a compositional bias: polar residues. Residues 245 to 269 (IKGDLNALNQQIARLQDISKDQRRH) adopt a coiled-coil conformation. Positions 310–335 (QQKTRRDQFSQGPGPLAAHTVSPSTA) are disordered. The 63-residue stretch at 375–437 (DNYVQQRAET…EAAHGEILKY (63 aa)) folds into the t-SNARE coiled-coil homology domain. Residues 446-466 (WLMIKIFGVLIFFFLFFVVFM) form a helical; Anchor for type IV membrane protein membrane-spanning segment. Residue S467 is a topological domain, vesicular.

It belongs to the syntaxin family. Homodimer.

The protein resides in the golgi apparatus. It localises to the cis-Golgi network membrane. Functionally, mediates endoplasmic reticulum to Golgi transport. In Drosophila melanogaster (Fruit fly), this protein is Syntaxin-5.